The chain runs to 199 residues: Imidazoleglycerol-phosphate dehydratase (199 aa).

The protein belongs to the imidazoleglycerol-phosphate dehydratase family.

It is found in the cytoplasm. The enzyme catalyses D-erythro-1-(imidazol-4-yl)glycerol 3-phosphate = 3-(imidazol-4-yl)-2-oxopropyl phosphate + H2O. It functions in the pathway amino-acid biosynthesis; L-histidine biosynthesis; L-histidine from 5-phospho-alpha-D-ribose 1-diphosphate: step 6/9. The sequence is that of Imidazoleglycerol-phosphate dehydratase from Rhodospirillum rubrum (strain ATCC 11170 / ATH 1.1.1 / DSM 467 / LMG 4362 / NCIMB 8255 / S1).